Here is a 436-residue protein sequence, read N- to C-terminus: Probable ABC transporter binding protein NosD (436 aa).

The N-terminal stretch at 1–27 (MFKAQATFSRYSAAVSLLLLFSGAAQA) is a signal peptide. PbH1 repeat units lie at residues 85-113 (APDV…FILP), 115-136 (AERA…FVDG), 137-166 (TRDV…HLFA), 167-188 (VSGA…YIDT), 189-210 (SNGN…HYMF), 233-255 (SRKL…LMNY), 293-314 (SLFN…HLTA), and 316-354 (SEDN…YWSD).

The protein belongs to the NosD family. In terms of assembly, the complex may be composed of an ATP-binding protein (NosF), a transmembrane protein (NosY) and a solute-binding protein (NosD).

It is found in the periplasm. Functionally, required for the assembly of the copper chromophores of nitrous oxide reductase. Could be part of the ABC transporter complex NosDFY. The sequence is that of Probable ABC transporter binding protein NosD from Stutzerimonas stutzeri (Pseudomonas stutzeri).